The sequence spans 272 residues: Putative pyruvate, phosphate dikinase regulatory protein (272 aa).

154-161 (GVSRTSKS) contributes to the ADP binding site.

It belongs to the pyruvate, phosphate/water dikinase regulatory protein family. PDRP subfamily.

It catalyses the reaction N(tele)-phospho-L-histidyl/L-threonyl-[pyruvate, phosphate dikinase] + ADP = N(tele)-phospho-L-histidyl/O-phospho-L-threonyl-[pyruvate, phosphate dikinase] + AMP + H(+). The enzyme catalyses N(tele)-phospho-L-histidyl/O-phospho-L-threonyl-[pyruvate, phosphate dikinase] + phosphate + H(+) = N(tele)-phospho-L-histidyl/L-threonyl-[pyruvate, phosphate dikinase] + diphosphate. In terms of biological role, bifunctional serine/threonine kinase and phosphorylase involved in the regulation of the pyruvate, phosphate dikinase (PPDK) by catalyzing its phosphorylation/dephosphorylation. This Wolbachia pipientis subsp. Culex pipiens (strain wPip) protein is Putative pyruvate, phosphate dikinase regulatory protein.